Consider the following 295-residue polypeptide: GTPase Era (295 aa).

In terms of domain architecture, Era-type G spans 7 to 176; the sequence is KTVSVCIIGR…ITSKAKIAPW (170 aa). A G1 region spans residues 15 to 22; it reads GRPNSGKS. 15 to 22 contributes to the GTP binding site; that stretch reads GRPNSGKS. The G2 stretch occupies residues 41 to 45; sequence QTTRS. The tract at residues 62–65 is G3; it reads DTPG. GTP contacts are provided by residues 62–66 and 124–127; these read DTPGI and NKID. Residues 124 to 127 form a G4 region; that stretch reads NKID. Residues 152 to 154 form a G5 region; it reads ISA. The KH type-2 domain maps to 204 to 281; sequence LQQELPYKLT…HLFLFVKVQE (78 aa).

This sequence belongs to the TRAFAC class TrmE-Era-EngA-EngB-Septin-like GTPase superfamily. Era GTPase family. As to quaternary structure, monomer.

It is found in the cytoplasm. The protein localises to the cell inner membrane. Its function is as follows. An essential GTPase that binds both GDP and GTP, with rapid nucleotide exchange. Plays a role in 16S rRNA processing and 30S ribosomal subunit biogenesis and possibly also in cell cycle regulation and energy metabolism. The sequence is that of GTPase Era from Rickettsia bellii (strain RML369-C).